Here is a 102-residue protein sequence, read N- to C-terminus: Keratinocyte differentiation-associated protein (102 aa).

Positions 1–22 (MKIPILPVVALLSLLALHAVQG) are cleaved as a signal peptide.

Expression restricted to suprabasal keratinocytes of the epidermis.

It localises to the secreted. Functionally, may act as a soluble regulator of keratinocyte differentiation. May play an important role in embryonic skin morphogenesis. The protein is Keratinocyte differentiation-associated protein of Mus musculus (Mouse).